The sequence spans 87 residues: DNA-directed RNA polymerase subunit omega (87 aa).

It belongs to the RNA polymerase subunit omega family. As to quaternary structure, the RNAP catalytic core consists of 2 alpha, 1 beta, 1 beta' and 1 omega subunit. When a sigma factor is associated with the core the holoenzyme is formed, which can initiate transcription.

The enzyme catalyses RNA(n) + a ribonucleoside 5'-triphosphate = RNA(n+1) + diphosphate. In terms of biological role, promotes RNA polymerase assembly. Latches the N- and C-terminal regions of the beta' subunit thereby facilitating its interaction with the beta and alpha subunits. This Thioalkalivibrio sulfidiphilus (strain HL-EbGR7) protein is DNA-directed RNA polymerase subunit omega.